We begin with the raw amino-acid sequence, 525 residues long: Cytochrome P450 703A2 (525 aa).

Residues 3–23 form a helical membrane-spanning segment; that stretch reads PFLLSIILCSWIFVVVSWKKL. Cys455 contacts heme.

Belongs to the cytochrome P450 family. Heme is required as a cofactor.

The protein resides in the membrane. It carries out the reaction dodecanoate + reduced [NADPH--hemoprotein reductase] + O2 = 7-hydroxydodecanoate + oxidized [NADPH--hemoprotein reductase] + H2O + H(+). Its function is as follows. Involved in pollen exine and anther epicuticular layer development. Catalyzes the in-chain hydroxylation of lauric acid (C12:0) preferentially on position 7, generating 7-hydroxylated lauric acid. Does not possess activity with other fatty acids (C14:0, C16:0, C16:1, and C18:0). Participates in a conserved pathway of in-chain hydroxylation of lauric acid required for anther cuticle and pollen exine formation. Directly regulated by TDR, a known regulator of tapetum programmed cell death (PCD) and pollen exine formation. In Oryza sativa subsp. japonica (Rice), this protein is Cytochrome P450 703A2.